Consider the following 1085-residue polypeptide: Solute carrier family 12 member 4 (1085 aa).

Topologically, residues 1-119 (MPHFTVVPVD…RRAAKAPSMG (119 aa)) are cytoplasmic. Ser24, Ser47, Ser51, Ser81, and Ser88 each carry phosphoserine. Residues 32 to 56 (AEREDSDGQGNHRENSPFLSPLDAS) form a disordered region. A discontinuously helical transmembrane segment spans residues 120 to 141 (TLMGVYLPCLQNIFGVILFLRL). 2 residues coordinate K(+): Asn131 and Ile132. Residues 142–149 (TWMVGTAG) are Extracellular-facing. Residues 150–172 (VLQALLIVLICCCCTLLTAISMS) traverse the membrane as a helical segment. At 173 to 196 (AIATNGVVPAGGSYFMISRSLGPE) the chain is on the cytoplasmic side. The chain crosses the membrane as a helical span at residues 197-225 (FGGAVGLCFYLGTTFAAAMYILGAIEILL). A K(+)-binding site is contributed by Tyr216. The Extracellular segment spans residues 226 to 248 (TYIAPPAAIFYPSGTHDMSSATL). 2 helical membrane-spanning segments follow: residues 249–271 (NNMRVYGTIFLTFMTLVVFVGVK) and 272–297 (YVNKFASLFLACVIISILSIYVGGIK). Residues 298–419 (SAFDPPVFPV…LYVVADIATS (122 aa)) lie on the Extracellular side of the membrane. Cysteines 308 and 323 form a disulfide. N-linked (GlcNAc...) asparagine glycosylation is found at Asn312, Asn331, and Asn347. Residues Cys343 and Cys353 are joined by a disulfide bond. Residues 420-440 (FTVLVGIFFPSVTGIMAGSNR) form a helical membrane-spanning segment. K(+)-binding residues include Pro429 and Thr432. Gly433, Ile434, and Met435 together coordinate chloride. At 441-450 (SGDLRDAQKS) the chain is on the cytoplasmic side. Residues 451–473 (IPVGTILAIVTTSLVYFSSVILF) form a helical membrane-spanning segment. Topologically, residues 474–504 (GACIEGVVLRDKYGDGVSRNLVVGTLAWPSP) are extracellular. A helical membrane pass occupies residues 505 to 531 (WVIVVGSFFSTCGAGLQSLTGAPRLLQ). Residues 532–554 (AIAKDNIIPFLRVFGHGKANGEP) are Cytoplasmic-facing. The next 2 membrane-spanning stretches (helical) occupy residues 555-575 (TWALLLTALIAELGILIASLD) and 576-598 (MVAPILSMFFLMCYLFVNLACAV). Tyr589 is a binding site for chloride. Over 599 to 612 (QTLLRTPNWRPRFK) the chain is Cytoplasmic. A run of 2 helical transmembrane segments spans residues 613–635 (YYHWALSFLGMSLCLALMFVSSW) and 636–651 (YYALVAMVIAGMIYKY). Residues 652–1085 (IEYQGAEKEW…GGREVITIYS (434 aa)) lie on the Cytoplasmic side of the membrane. Residues 665–681 (IRGLSLSAARYALLRLE) form a scissor helix region. Leu697, Lys699, Lys707, Tyr708, and Val730 together coordinate ATP. Ser734 bears the Phosphoserine mark. ATP contacts are provided by Gly794, Trp795, and Tyr797. Phosphoserine occurs at positions 916 and 967. The residue at position 983 (Thr983) is a Phosphothreonine. Ser1050 is modified (phosphoserine).

Belongs to the SLC12A transporter family. K/Cl co-transporter subfamily. As to quaternary structure, homodimer; adopts a domain-swap conformation at the scissor helices connecting the transmembrane domain and C-terminal domain. Heterodimer with other K-Cl cotransporters. In terms of processing, N-glycosylated. Phosphorylated, phosphorylation may regulate transporter activity. In terms of tissue distribution, ubiquitous.

It is found in the cell membrane. The enzyme catalyses K(+)(in) + chloride(in) = K(+)(out) + chloride(out). Its activity is regulated as follows. Inhibited by WNK3. Its function is as follows. Mediates electroneutral potassium-chloride cotransport when activated by cell swelling. May contribute to cell volume homeostasis in single cells. May be involved in the regulation of basolateral Cl(-) exit in NaCl absorbing epithelia. The chain is Solute carrier family 12 member 4 (Slc12a4) from Rattus norvegicus (Rat).